The primary structure comprises 337 residues: Casein kinase I isoform alpha-like (337 aa).

The residue at position 8 (Lys8) is an N6-acetyllysine. The 269-residue stretch at 17 to 285 folds into the Protein kinase domain; it reads YKLVRKIGSG…YLRQLFRILF (269 aa). Residues 23-31 and Lys46 each bind ATP; that span reads IGSGSFGDV. The Proton acceptor role is filled by Asp136. The span at 309–325 shows a compositional bias: low complexity; that stretch reads AASSSGQGQQAQTQTGK. The disordered stretch occupies residues 309–337; the sequence is AASSSGQGQQAQTQTGKQTEKNKNNVKDN. A compositionally biased stretch (basic and acidic residues) spans 326-337; that stretch reads QTEKNKNNVKDN.

It belongs to the protein kinase superfamily. CK1 Ser/Thr protein kinase family. Casein kinase I subfamily. In terms of assembly, interacts with FAM83A, FAM83B, FAM83C, FAM83D, FAM83E, FAM83F, FAM83G and FAM83H (via DUF1669).

The protein resides in the cytoplasm. It carries out the reaction L-seryl-[protein] + ATP = O-phospho-L-seryl-[protein] + ADP + H(+). The enzyme catalyses L-threonyl-[protein] + ATP = O-phospho-L-threonyl-[protein] + ADP + H(+). Its function is as follows. Casein kinases are operationally defined by their preferential utilization of acidic proteins such as caseins as substrates. It can phosphorylate a large number of proteins. Participates in Wnt signaling. The chain is Casein kinase I isoform alpha-like (CSNK1A1L) from Homo sapiens (Human).